The chain runs to 522 residues: Glycogen synthase (522 aa).

Positions 1–29 are disordered; it reads MISAVLDTQGDHPQQQAGDRAAPSVPVPG. Lys58 lines the ADP-alpha-D-glucose pocket.

This sequence belongs to the glycosyltransferase 1 family. Bacterial/plant glycogen synthase subfamily.

It carries out the reaction [(1-&gt;4)-alpha-D-glucosyl](n) + ADP-alpha-D-glucose = [(1-&gt;4)-alpha-D-glucosyl](n+1) + ADP + H(+). It participates in glycan biosynthesis; glycogen biosynthesis. Its function is as follows. Synthesizes alpha-1,4-glucan chains using ADP-glucose. This Pseudomonas fluorescens (strain ATCC BAA-477 / NRRL B-23932 / Pf-5) protein is Glycogen synthase.